A 203-amino-acid chain; its full sequence is ATP-dependent Clp protease proteolytic subunit (203 aa).

Residue Ser-100 is the Nucleophile of the active site. His-125 is an active-site residue.

The protein belongs to the peptidase S14 family. Fourteen ClpP subunits assemble into 2 heptameric rings which stack back to back to give a disk-like structure with a central cavity, resembling the structure of eukaryotic proteasomes.

It is found in the cytoplasm. It carries out the reaction Hydrolysis of proteins to small peptides in the presence of ATP and magnesium. alpha-casein is the usual test substrate. In the absence of ATP, only oligopeptides shorter than five residues are hydrolyzed (such as succinyl-Leu-Tyr-|-NHMec, and Leu-Tyr-Leu-|-Tyr-Trp, in which cleavage of the -Tyr-|-Leu- and -Tyr-|-Trp bonds also occurs).. Functionally, cleaves peptides in various proteins in a process that requires ATP hydrolysis. Has a chymotrypsin-like activity. Plays a major role in the degradation of misfolded proteins. This is ATP-dependent Clp protease proteolytic subunit from Anaeromyxobacter dehalogenans (strain 2CP-1 / ATCC BAA-258).